Consider the following 584-residue polypeptide: Alkaline nuclease (584 aa).

The segment at 409 to 429 (GGGADHHLRGSPGDSPPPIPF) is disordered.

The protein belongs to the herpesviridae alkaline nuclease family. Interacts with major DNA-binding protein; this interaction increases the nuclease processivity of the alkaline exonuclease.

It localises to the host nucleus. It is found in the host cytoplasm. Functionally, plays a role in processing non linear or branched viral DNA intermediates in order to promote the production of mature packaged unit-length linear progeny viral DNA molecules. Exhibits endonuclease and exonuclease activities and accepts both double-stranded and single-stranded DNA as substrate. Exonuclease digestion of DNA is in the 5'-&gt; 3' direction and the products are 5'-monophosphate nucleosides. Additionally, forms a recombinase with the major DNA-binding protein, which displays strand exchange activity. This is Alkaline nuclease (UL98) from Homo sapiens (Human).